A 223-amino-acid polypeptide reads, in one-letter code: Twisted gastrulation protein homolog 1 (223 aa).

A signal peptide spans 1–25 (MKLHYVAVLTLAILMFLTWLPASLS). Residues asparagine 52 and asparagine 81 are each glycosylated (N-linked (GlcNAc...) asparagine).

This sequence belongs to the twisted gastrulation protein family. As to quaternary structure, interacts with CHRD and BMP4. This interaction enhances CHRD/BMP4 complex formation. Interacts with BMP7.

It localises to the secreted. Its function is as follows. May be involved in dorsoventral axis formation. Seems to antagonize BMP signaling by forming ternary complexes with CHRD and BMPs, thereby preventing BMPs from binding to their receptors. In addition to the anti-BMP function, also has pro-BMP activity, partly mediated by cleavage and degradation of CHRD, which releases BMPs from ternary complexes. May be an important modulator of BMP-regulated cartilage development and chondrocyte differentiation. May play a role in thymocyte development. This Pongo abelii (Sumatran orangutan) protein is Twisted gastrulation protein homolog 1 (TWSG1).